A 115-amino-acid chain; its full sequence is DNA-binding protein STK_13740 (115 aa).

The protein belongs to the PDCD5 family.

This is DNA-binding protein STK_13740 from Sulfurisphaera tokodaii (strain DSM 16993 / JCM 10545 / NBRC 100140 / 7) (Sulfolobus tokodaii).